A 578-amino-acid polypeptide reads, in one-letter code: Glutamate--tRNA ligase (578 aa).

The short motif at 97-107 (PNPDFVIHLGN) is the 'HIGH' region element.

Belongs to the class-I aminoacyl-tRNA synthetase family. Glutamate--tRNA ligase type 2 subfamily.

The protein resides in the cytoplasm. The enzyme catalyses tRNA(Glu) + L-glutamate + ATP = L-glutamyl-tRNA(Glu) + AMP + diphosphate. In terms of biological role, catalyzes the attachment of glutamate to tRNA(Glu) in a two-step reaction: glutamate is first activated by ATP to form Glu-AMP and then transferred to the acceptor end of tRNA(Glu). The sequence is that of Glutamate--tRNA ligase from Hyperthermus butylicus (strain DSM 5456 / JCM 9403 / PLM1-5).